The following is a 377-amino-acid chain: MANKDYYELLGLQKGASDDEIKRAFRKLAVKYHPDRNQGNAEAEEKFKEINEAYQVLSDPEKKAKYDQFGSAAFDGSGGFGGGGFGGFDGFDMGGFGDIFESFFGGGGSNSRRRNGPVRGNDIEYTITLTFEEAVFGVEKEISVTRNENCEHCHGSGAEPGTNAKTCPTCSGSGQVRVQRQTPLGSFVSTSTCDTCRGTGKIIEKPCSECRGKGSVRKTRKIKVNIPAGVDTGNVMPLRGQGEHGLRGGSPGDLYVRINVTPSKVFTRKGNDVYIDAHISMPKAALGTEITVATVDGNVKYTVPPGTQSGTMFRLKGKGIQRVNSNGKGDQYVKVIVDIPKTLNKEQKEALYDFMRASGEEFDEANVPKKKLFGKNK.

One can recognise a J domain in the interval 5–70; the sequence is DYYELLGLQK…EKKAKYDQFG (66 aa). A CR-type zinc finger spans residues 137–219; the sequence is GVEKEISVTR…CRGKGSVRKT (83 aa). 8 residues coordinate Zn(2+): Cys-150, Cys-153, Cys-167, Cys-170, Cys-193, Cys-196, Cys-207, and Cys-210. CXXCXGXG motif repeat units follow at residues 150–157, 167–174, 193–200, and 207–214; these read CEHCHGSG, CPTCSGSG, CDTCRGTG, and CSECRGKG.

It belongs to the DnaJ family. As to quaternary structure, homodimer. The cofactor is Zn(2+).

It is found in the cytoplasm. Its function is as follows. Participates actively in the response to hyperosmotic and heat shock by preventing the aggregation of stress-denatured proteins and by disaggregating proteins, also in an autonomous, DnaK-independent fashion. Unfolded proteins bind initially to DnaJ; upon interaction with the DnaJ-bound protein, DnaK hydrolyzes its bound ATP, resulting in the formation of a stable complex. GrpE releases ADP from DnaK; ATP binding to DnaK triggers the release of the substrate protein, thus completing the reaction cycle. Several rounds of ATP-dependent interactions between DnaJ, DnaK and GrpE are required for fully efficient folding. Also involved, together with DnaK and GrpE, in the DNA replication of plasmids through activation of initiation proteins. This Clostridium beijerinckii (strain ATCC 51743 / NCIMB 8052) (Clostridium acetobutylicum) protein is Chaperone protein DnaJ.